We begin with the raw amino-acid sequence, 228 residues long: Orotidine 5'-phosphate decarboxylase (228 aa).

Substrate contacts are provided by residues aspartate 8, lysine 30, aspartate 59–threonine 68, threonine 118, arginine 178, glutamine 187, glycine 207, and arginine 208. Lysine 61 acts as the Proton donor in catalysis.

The protein belongs to the OMP decarboxylase family. Type 1 subfamily. As to quaternary structure, homodimer.

It catalyses the reaction orotidine 5'-phosphate + H(+) = UMP + CO2. It participates in pyrimidine metabolism; UMP biosynthesis via de novo pathway; UMP from orotate: step 2/2. In terms of biological role, catalyzes the decarboxylation of orotidine 5'-monophosphate (OMP) to uridine 5'-monophosphate (UMP). The sequence is that of Orotidine 5'-phosphate decarboxylase from Wolinella succinogenes (strain ATCC 29543 / DSM 1740 / CCUG 13145 / JCM 31913 / LMG 7466 / NCTC 11488 / FDC 602W) (Vibrio succinogenes).